The chain runs to 482 residues: UDP-N-acetylmuramate--L-alanine ligase (482 aa).

Glycine 123–threonine 129 contacts ATP.

Belongs to the MurCDEF family.

The protein resides in the cytoplasm. The enzyme catalyses UDP-N-acetyl-alpha-D-muramate + L-alanine + ATP = UDP-N-acetyl-alpha-D-muramoyl-L-alanine + ADP + phosphate + H(+). It participates in cell wall biogenesis; peptidoglycan biosynthesis. Its function is as follows. Cell wall formation. This chain is UDP-N-acetylmuramate--L-alanine ligase, found in Pseudomonas putida (strain ATCC 700007 / DSM 6899 / JCM 31910 / BCRC 17059 / LMG 24140 / F1).